Reading from the N-terminus, the 164-residue chain is Cyclic pyranopterin monophosphate synthase (164 aa).

Substrate contacts are provided by residues 75–77 (MCH) and 116–117 (ME). Asp131 is an active-site residue.

Belongs to the MoaC family. As to quaternary structure, homohexamer; trimer of dimers.

It carries out the reaction (8S)-3',8-cyclo-7,8-dihydroguanosine 5'-triphosphate = cyclic pyranopterin phosphate + diphosphate. The protein operates within cofactor biosynthesis; molybdopterin biosynthesis. In terms of biological role, catalyzes the conversion of (8S)-3',8-cyclo-7,8-dihydroguanosine 5'-triphosphate to cyclic pyranopterin monophosphate (cPMP). In Staphylococcus aureus (strain MRSA252), this protein is Cyclic pyranopterin monophosphate synthase.